The primary structure comprises 412 residues: Diphosphomevalonate decarboxylase MVD1, peroxisomal (412 aa).

Tyr23 to Lys26 provides a ligand contact to (R)-5-diphosphomevalonate. Residues Ser40–Leu48 carry the Peroxisomal targeting signal PTS2 motif. Residues Arg78, Ser161–Arg166, and Thr217 each bind (R)-5-diphosphomevalonate.

It belongs to the diphosphomevalonate decarboxylase family. As to quaternary structure, homodimer.

The protein localises to the peroxisome. It carries out the reaction (R)-5-diphosphomevalonate + ATP = isopentenyl diphosphate + ADP + phosphate + CO2. It participates in isoprenoid biosynthesis; isopentenyl diphosphate biosynthesis via mevalonate pathway; isopentenyl diphosphate from (R)-mevalonate: step 3/3. In terms of biological role, performs the first committed step in the biosynthesis of isoprene-containing compounds such as sterols and terpenoids. Is specific for (R)-5-diphosphomevalonate (MVAPP). The catalytic efficiency with (R)-5-phosphomevalonate (MVAP) as substrate is 10000-fold lower than for MVAPP. Can complement a yeast mutant defective in MVD activity. This is Diphosphomevalonate decarboxylase MVD1, peroxisomal from Arabidopsis thaliana (Mouse-ear cress).